The chain runs to 67 residues: Small ribosomal subunit protein bS21 (67 aa).

Belongs to the bacterial ribosomal protein bS21 family.

This Rhodospirillum centenum (strain ATCC 51521 / SW) protein is Small ribosomal subunit protein bS21.